The chain runs to 155 residues: Mitochondrial import protein 1 (155 aa).

The protein belongs to the MIM1 family.

Its subcellular location is the mitochondrion outer membrane. Its function is as follows. Required for the assembly of the TOM (translocase of outer membrane) receptor complex, which is responsible for the recognition and translocation of cytosolically synthesized mitochondrial preproteins. This is Mitochondrial import protein 1 from Eremothecium gossypii (strain ATCC 10895 / CBS 109.51 / FGSC 9923 / NRRL Y-1056) (Yeast).